A 920-amino-acid chain; its full sequence is MPLKKLESSNNQAIIAEEVALLKEMLENITRRMIGDDAFTVIESIMVLSEKQDYIELEKVVANISNQEMEVISRYFSILPLLINISEDVDLAYEINYQNNTDTDYLGKLALTIKDLAGKDNGKDILEQVNVVPVLTAHPTQVQRKTILELTTHIHKLLRKYRDAKAGVISLEKWRQELYRYIEMIMQTDIIREKKLQVKNEIKNVMQYYDGSLIQAVTKLTTEYKNLAQKHGLELDNPKPITMGMWIGGDRDGNPFVTAETLCLSATVQSEVILNYYIDKLAALYRTFSLSSTLVQPNSEVERLASLSQDQSIYRGNEPYRRAFHYIQSRLKQTQIQLTNQPAARMSSSVGLSTSAWSSPASLENPILAYDSPVDFKADLKAIEQSLLDNGNSALIEGDLREVMQAVDIFGFFLASIDMRQDSSVQEACVAELLKGANIVDDYSSLSETEKCDVLVQQLMEEPRTLSSAAVAKSDLLEKELAIYTTARELKDKLGEEVIKQHIISHTESVSDMFELAIMLKEVGLVDQQRARVQIVPLFETIEDLDNARDIMAAYLSHDIVKSWIATNRNYQEIMLGYSDSNKDGGYLASGWTLYKAQNELTAIGEEHGVKITFFHGRGGTVGRGGGPSYDAITSQPFGSIKDRIRLTEQGEIIENKYGNKDVAYYHLEMLISASINRMVTQMITDPNEIDSFREIMDSIVADSNIIYRKLVFDNPHFYDYFFEASPIKEVSSLNIGSRPAARKTITEITGLRAIPWVFSWSQNRIMFPGWYGVGSAFKRYIDRAQGNLERLQHMYQTWPFFHSLLSNVDMVLSKSNMNIAFQYAQLAESQDVRDVFYEILDEWQLTKNVILAIQDHDDLLEDNPSLKHSLKSRLPYFNVLNYIQIELIKRWRNNQLDENDEKLIHTTINGIATGLRNSG.

Catalysis depends on residues H138 and K583.

This sequence belongs to the PEPCase type 1 family. Mg(2+) is required as a cofactor.

It carries out the reaction oxaloacetate + phosphate = phosphoenolpyruvate + hydrogencarbonate. Its function is as follows. Forms oxaloacetate, a four-carbon dicarboxylic acid source for the tricarboxylic acid cycle. This is Phosphoenolpyruvate carboxylase from Streptococcus pyogenes serotype M5 (strain Manfredo).